The chain runs to 374 residues: 5-methylthioribulose-1-phosphate isomerase (374 aa).

This sequence belongs to the RuBisCO large chain family. Type IV subfamily.

It catalyses the reaction 5-(methylsulfanyl)-D-ribulose 1-phosphate = S-methyl-1-thio-D-xylulose 5-phosphate. The enzyme catalyses 5-(methylsulfanyl)-D-ribulose 1-phosphate = 1-(methylsulfanyl)ribulose 5-phosphate. The protein operates within amino-acid biosynthesis; L-methionine biosynthesis via salvage pathway. It functions in the pathway metabolic intermediate biosynthesis; 1-deoxy-D-xylulose 5-phosphate biosynthesis. In terms of biological role, catalyzes the conversion of 5-methylthio-D-ribulose 1-phosphate (MTRu-1P) to a 3:1 mixture of 1-methylthioxylulose 5-phosphate (MTXu-5P) and 1-methylthioribulose 5-phosphate (MTRu-5P). Involved in the MTA-isoprenoid shunt of the methionine salvage pathway. This chain is 5-methylthioribulose-1-phosphate isomerase, found in Rhodospirillum rubrum (strain ATCC 11170 / ATH 1.1.1 / DSM 467 / LMG 4362 / NCIMB 8255 / S1).